Reading from the N-terminus, the 118-residue chain is Large ribosomal subunit protein bL19 (118 aa).

The protein belongs to the bacterial ribosomal protein bL19 family.

Functionally, this protein is located at the 30S-50S ribosomal subunit interface and may play a role in the structure and function of the aminoacyl-tRNA binding site. The polypeptide is Large ribosomal subunit protein bL19 (rplS) (Serratia marcescens).